A 113-amino-acid polypeptide reads, in one-letter code: Hydrogenase maturation factor HybF (113 aa).

Residues H2 and E3 each coordinate Ni(2+). Residues C73, C76, C89, and C92 each contribute to the Zn(2+) site.

It belongs to the HypA/HybF family. HybF subfamily.

Functionally, involved in the maturation of [NiFe] hydrogenases. Required for nickel insertion into the metal center of the hydrogenase. In Salmonella typhi, this protein is Hydrogenase maturation factor HybF.